The following is an 898-amino-acid chain: Serine/threonine-protein kinase TAO3 (898 aa).

Residues 24-277 (FIDLHEIGHG…AAELLRHDFI (254 aa)) form the Protein kinase domain. ATP-binding positions include 30–38 (IGHGSFGAV) and lysine 53. The active-site Proton acceptor is the aspartate 147. Disordered regions lie at residues 316-372 (TRNG…EVMD) and 405-424 (DEAG…SVQS). Residues serine 324, serine 331, serine 343, serine 346, and serine 349 each carry the phosphoserine modification. Residues 349-366 (SIPSVSVSTGSRSSSVNS) are compositionally biased toward low complexity. Position 357 is a phosphothreonine (threonine 357). Residue serine 359 is modified to Phosphoserine. Residues 405–416 (DEAGHGDPRPEP) show a composition bias toward basic and acidic residues. Serine 442 is modified (phosphoserine). Coiled-coil stretches lie at residues 452–502 (EQEN…THAN), 548–649 (FLES…HAML), and 753–871 (ILKT…QERE). Positions 565–596 (EEMNEDHSTPKKEKQERISKHKENLQHTQAEE) are disordered. Lysine 830 is subject to N6-acetyllysine.

Belongs to the protein kinase superfamily. STE Ser/Thr protein kinase family. STE20 subfamily. In terms of assembly, self-associates. Interacts with ERN1 and TRAF2. Interaction with TRAF2 is facilitated under ER stress conditions, such as treatment with tunicamycin, and may promote TRAF2 phosphorylation. Interacts (via N-terminus) with STK25; the interaction promotes STK25 abundance at the level of protein expression and/or stability. Post-translationally, autophosphorylated. Phosphorylation at Ser-324 by ATM following DNA damage is required for activation of the p38/MAPK14 stress-activated MAPK cascade. Phosphorylated at Ser-324 and on Tyr residues during T cell activation. Phosphorylated by LRRK2. In terms of tissue distribution, ubiquitously expressed, with a higher expression in the retina.

Its subcellular location is the cytoplasm. The protein resides in the cell membrane. The protein localises to the membrane raft. It localises to the lipid droplet. The catalysed reaction is L-seryl-[protein] + ATP = O-phospho-L-seryl-[protein] + ADP + H(+). It carries out the reaction L-threonyl-[protein] + ATP = O-phospho-L-threonyl-[protein] + ADP + H(+). Its function is as follows. Serine/threonine-protein kinase that acts as a regulator of the p38/MAPK14 stress-activated MAPK cascade and of the MAPK8/JNK cascade. In response to DNA damage, involved in the G2/M transition DNA damage checkpoint by activating the p38/MAPK14 stress-activated MAPK cascade, probably by mediating phosphorylation of upstream MAP2K3 and MAP2K6 kinases. Inhibits basal activity of the MAPK8/JNK cascade and diminishes its activation in response to epidermal growth factor (EGF). Positively regulates canonical T cell receptor (TCR) signaling by preventing early PTPN6/SHP1-mediated inactivation of LCK, ensuring sustained TCR signaling that is required for optimal activation and differentiation of T cells. Phosphorylates PTPN6/SHP1 on 'Thr-396', leading to its polyubiquitination and subsequent proteasomal degradation. Required for cell surface expression of metalloprotease ADAM10 on type 1 transitional B cells which is necessary for their NOTCH-mediated development into marginal zone B cells. Also required for the NOTCH-mediated terminal differentiation of splenic conventional type 2 dendritic cells. Positively regulates osteoblast differentiation by acting as an upstream activator of the JNK pathway. Promotes JNK signaling in hepatocytes and positively regulates hepatocyte lipid storage by inhibiting beta-oxidation and triacylglycerol secretion while enhancing lipid synthesis. Restricts age-associated inflammation by negatively regulating differentiation of macrophages and their production of pro-inflammatory cytokines. Plays a role in negatively regulating the abundance of regulatory T cells in white adipose tissue. The chain is Serine/threonine-protein kinase TAO3 (Taok3) from Rattus norvegicus (Rat).